The primary structure comprises 96 residues: MRHYELMVLLDPDVEERSVEPSLDQFLNVVRQDGGTVQKIDVWGRRRLAYEIRKKSEGIYAVIDLIANPQTVKELDRQLNLNENVLRTKLVRPDAR.

The protein belongs to the bacterial ribosomal protein bS6 family.

Binds together with bS18 to 16S ribosomal RNA. The polypeptide is Small ribosomal subunit protein bS6 (Acidothermus cellulolyticus (strain ATCC 43068 / DSM 8971 / 11B)).